A 427-amino-acid polypeptide reads, in one-letter code: MSEFWLISAPGDKENLQALERMNTVTSKSNLSYNTKFAIPDFKVGTLDSLVGLSDELGKLDTFAESLIRRMAQSVVEVMEDSKGKVQEHLLANGVDLTSFVTHFEWDMAKYPVKQPLVSVVDTIAKQLAQIEMDLKSRTAAYNTLKTNLENLEKKSMGNLFTRTLSDIVSKEDFVLDSEYLVTLLVIVPKPNYSQWQKTYESLSDMVVPRSTKLITEDKEGGLFTVTLFRKVIEDFKTKAKENKFTVREFYYDEKEIEREREEMARLLSDKKQQYQTSCVALKKGSSTFPDHKVKVTPLGNPDRPAAGQTDRERESEGEGEGPLLRWLKVNFSEAFIAWIHIKALRVFVESVLRYGLPVNFQAVLLQPHKKSSTKRLREVLNSVFRHLDEVAATSILDASVEIPGLQLNNQDYFPYVYFHIDLSLLD.

Positions His-292–Glu-319 are disordered.

Belongs to the V-ATPase C subunit family. As to quaternary structure, V-ATPase is a heteromultimeric enzyme made up of two complexes: the ATP-hydrolytic V1 complex and the proton translocation V0 complex. The V1 complex consists of three catalytic AB heterodimers that form a heterohexamer, three peripheral stalks each consisting of EG heterodimers, one central rotor including subunits D and F, and the regulatory subunits C and H. The proton translocation complex V0 consists of the proton transport subunit a, a ring of proteolipid subunits c9c'', rotary subunit d, subunits e and f, and the accessory subunits ATP6AP1/Ac45 and ATP6AP2/PRR. Kidney and placenta.

Functionally, subunit of the V1 complex of vacuolar(H+)-ATPase (V-ATPase), a multisubunit enzyme composed of a peripheral complex (V1) that hydrolyzes ATP and a membrane integral complex (V0) that translocates protons. V-ATPase is responsible for acidifying and maintaining the pH of intracellular compartments and in some cell types, is targeted to the plasma membrane, where it is responsible for acidifying the extracellular environment. Subunit C is necessary for the assembly of the catalytic sector of the enzyme and is likely to have a specific function in its catalytic activity. This chain is V-type proton ATPase subunit C 2 (ATP6V1C2), found in Homo sapiens (Human).